Consider the following 798-residue polypeptide: Glycogen phosphorylase (798 aa).

Lysine 646 bears the N6-(pyridoxal phosphate)lysine mark.

This sequence belongs to the glycogen phosphorylase family. It depends on pyridoxal 5'-phosphate as a cofactor.

The enzyme catalyses [(1-&gt;4)-alpha-D-glucosyl](n) + phosphate = [(1-&gt;4)-alpha-D-glucosyl](n-1) + alpha-D-glucose 1-phosphate. Phosphorylase is an important allosteric enzyme in carbohydrate metabolism. Enzymes from different sources differ in their regulatory mechanisms and in their natural substrates. However, all known phosphorylases share catalytic and structural properties. The chain is Glycogen phosphorylase (glgP) from Bacillus subtilis (strain 168).